Consider the following 446-residue polypeptide: N-succinylarginine dihydrolase (446 aa).

Residues Ala-19 to Ser-28, Asn-110, and His-137 to Arg-138 each bind substrate. Glu-174 is a catalytic residue. Arg-213 contributes to the substrate binding site. Residue His-249 is part of the active site. Substrate contacts are provided by Asp-251 and Asn-364. Catalysis depends on Cys-370, which acts as the Nucleophile.

This sequence belongs to the succinylarginine dihydrolase family. Homodimer.

It carries out the reaction N(2)-succinyl-L-arginine + 2 H2O + 2 H(+) = N(2)-succinyl-L-ornithine + 2 NH4(+) + CO2. The protein operates within amino-acid degradation; L-arginine degradation via AST pathway; L-glutamate and succinate from L-arginine: step 2/5. Its function is as follows. Catalyzes the hydrolysis of N(2)-succinylarginine into N(2)-succinylornithine, ammonia and CO(2). This is N-succinylarginine dihydrolase from Burkholderia multivorans (strain ATCC 17616 / 249).